The primary structure comprises 356 residues: uncharacterized protein (356 aa).

NADP(+) is bound at residue 37–44; sequence TGASSGIG. Ser168 provides a ligand contact to substrate. Tyr181 (proton acceptor) is an active-site residue.

Belongs to the short-chain dehydrogenases/reductases (SDR) family.

This is an uncharacterized protein from Bacillus subtilis (strain 168).